The chain runs to 465 residues: Solute carrier family 7 member 12 (465 aa).

At 1 to 6 (MQLLRA) the chain is on the cytoplasmic side. A helical transmembrane segment spans residues 7 to 27 (LGVFHVSMILFSATLGTGIFV). The Extracellular portion of the chain corresponds to 28–39 (TPKAVLKYSSLN). A helical membrane pass occupies residues 40 to 60 (IPVSLSIWAGCGLLSIMSALC). The Cytoplasmic segment spans residues 61-81 (NAEIATTYPLSGASYYFLKRT). The chain crosses the membrane as a helical span at residues 82 to 102 (LGSSVAFLSLWIKLFAHFLGI). At 103–132 (GAQCLLIATSVIQCFYSGCPAPELPTKCLA) the chain is on the extracellular side. The chain crosses the membrane as a helical span at residues 133–153 (LAILWSFGIVSARGIKTVAWF). Asparagine 154 is a topological domain (cytoplasmic). Residues 155–175 (TVSSFIKLSVLCLISLTVLLV) form a helical membrane-spanning segment. At 176 to 202 (NGKKENVSRFENALDAELPNASQIADA) the chain is on the extracellular side. Residues 203–223 (ILQVSYSYLGSSVLIVIAGEI) traverse the membrane as a helical segment. Residues 224 to 234 (KRPTETIPKTL) lie on the Cytoplasmic side of the membrane. Residues 235–255 (IYGISIVTVLYLLTNISYLAV) traverse the membrane as a helical segment. At 256-280 (LTSQEIIFSDSVGVTWMNRVFPSIQ) the chain is on the extracellular side. The helical transmembrane segment at 281–301 (WISSFLISAFLLGSVSCGIVS) threads the bilayer. Residues 302 to 327 (ASRVFYSASQEGEFPSIYSMLNDHHS) are Cytoplasmic-facing. A helical transmembrane segment spans residues 328–351 (PAVADIQIVILSSVAIISSSIIYL). At 352-356 (VKYVS) the chain is on the extracellular side. The helical transmembrane segment at 357 to 375 (LGSFCINLLQMIGLLKIRY) threads the bilayer. The Cytoplasmic portion of the chain corresponds to 376–386 (QNPDIPRPYKV). The helical transmembrane segment at 387–407 (WLPFIFGSIALSLFLIFTPVI) threads the bilayer. At 408 to 409 (QS) the chain is on the extracellular side. Residues 410–430 (PSIEHVYQVVFLFCGFLCYWL) traverse the membrane as a helical segment. Residues 431–465 (QANLNGHATCFDTITCYCQLLFNISPSEDPEEQKN) are Cytoplasmic-facing.

The protein belongs to the amino acid-polyamine-organocation (APC) superfamily. As to quaternary structure, probably forms multimers, perhaps with an unknown protein(s). As to expression, expressed in kidney and red blood cells (at protein level). Expressed in kidney along the collecting ducts in the cortex, outer and inner medulla. May be expressed in placenta, lungs, spleen and skeletal muscles.

It localises to the apical cell membrane. It is found in the basal cell membrane. Its subcellular location is the cytoplasm. Probably mediates sodium- and chloride-independent uptake of neutral amino acids. The protein is Solute carrier family 7 member 12 of Mus musculus (Mouse).